The primary structure comprises 541 residues: Tyrosine-protein kinase Yes (541 aa).

Residues 1–10 show a composition bias toward basic and acidic residues; sequence MGCIKSKENK. Residues 1 to 29 are disordered; sequence MGCIKSKENKSPAIKYTPENPTEPVNTSA. Gly-2 carries N-myristoyl glycine lipidation. A lipid anchor (S-palmitoyl cysteine; in membrane form) is attached at Cys-3. A compositionally biased stretch (polar residues) spans 19-29; it reads ENPTEPVNTSA. Position 32 is a phosphotyrosine (Tyr-32). Residues 89 to 150 form the SH3 domain; that stretch reads GGVTIFVALY…PSNYVAPADS (62 aa). The region spanning 156-253 is the SH2 domain; sequence WYFGKMGRKD…GLCHKLTTVC (98 aa). Residues 275 to 528 enclose the Protein kinase domain; sequence LRLEVKLGQG…YIQSFLEDYF (254 aa). ATP-binding positions include 281 to 289 and Lys-303; that span reads LGQGCFGEV. 2 positions are modified to phosphotyrosine: Tyr-334 and Tyr-343. Asp-394 acts as the Proton acceptor in catalysis. Tyr-424 is modified (phosphotyrosine; by autocatalysis). Tyr-535 carries the post-translational modification Phosphotyrosine.

In terms of assembly, interacts with YAP1 and CSF1R. Interacts with FASLG. Interacts with CTNND1; this interaction allows YES1-mediated activation of FYN and FER and subsequent phosphorylation of CTNND1. Interacts with IL6ST/gp130. Interacts with SCRIB, when YES1 is in a closed conformation; the interaction facilitates YES1 autophosphorylation. In terms of processing, phosphorylated. Phosphorylation by CSK on the C-terminal tail maintains the enzyme in an inactive state. Autophosphorylation at Tyr-424 maintains enzyme activity by blocking CSK-mediated inhibition. Palmitoylation at Cys-3 promotes membrane localization.

It is found in the cell membrane. It localises to the cytoplasm. The protein localises to the cytoskeleton. Its subcellular location is the microtubule organizing center. The protein resides in the centrosome. It is found in the cytosol. It localises to the cell junction. The enzyme catalyses L-tyrosyl-[protein] + ATP = O-phospho-L-tyrosyl-[protein] + ADP + H(+). Its function is as follows. Non-receptor protein tyrosine kinase that is involved in the regulation of cell growth and survival, apoptosis, cell-cell adhesion, cytoskeleton remodeling, and differentiation. Stimulation by receptor tyrosine kinases (RTKs) including EGFR, PDGFR, CSF1R and FGFR leads to recruitment of YES1 to the phosphorylated receptor, and activation and phosphorylation of downstream substrates. Upon EGFR activation, promotes the phosphorylation of PARD3 to favor epithelial tight junction assembly. Participates in the phosphorylation of specific junctional components such as CTNND1 by stimulating the FYN and FER tyrosine kinases at cell-cell contacts. Upon T-cell stimulation by CXCL12, phosphorylates collapsin response mediator protein 2/DPYSL2 and induces T-cell migration. Participates in CD95L/FASLG signaling pathway and mediates AKT-mediated cell migration. Plays a role in cell cycle progression by phosphorylating the cyclin dependent kinase 4/CDK4 thus regulating the G1 phase. Also involved in G2/M progression and cytokinesis. Catalyzes phosphorylation of organic cation transporter OCT2 which induces its transport activity. In Rattus norvegicus (Rat), this protein is Tyrosine-protein kinase Yes (Yes1).